Consider the following 256-residue polypeptide: Imidazole glycerol phosphate synthase subunit HisF (256 aa).

Catalysis depends on residues Asp-12 and Asp-131.

It belongs to the HisA/HisF family. As to quaternary structure, heterodimer of HisH and HisF.

It localises to the cytoplasm. It catalyses the reaction 5-[(5-phospho-1-deoxy-D-ribulos-1-ylimino)methylamino]-1-(5-phospho-beta-D-ribosyl)imidazole-4-carboxamide + L-glutamine = D-erythro-1-(imidazol-4-yl)glycerol 3-phosphate + 5-amino-1-(5-phospho-beta-D-ribosyl)imidazole-4-carboxamide + L-glutamate + H(+). The protein operates within amino-acid biosynthesis; L-histidine biosynthesis; L-histidine from 5-phospho-alpha-D-ribose 1-diphosphate: step 5/9. Its function is as follows. IGPS catalyzes the conversion of PRFAR and glutamine to IGP, AICAR and glutamate. The HisF subunit catalyzes the cyclization activity that produces IGP and AICAR from PRFAR using the ammonia provided by the HisH subunit. The chain is Imidazole glycerol phosphate synthase subunit HisF from Pseudomonas fluorescens (strain Pf0-1).